We begin with the raw amino-acid sequence, 254 residues long: Alcohol dehydrogenase 1 (254 aa).

NAD(+) is bound at residue 10–33 (FVAGLGGIGFDTSREIVKSGPKNL). Serine 138 provides a ligand contact to substrate. Catalysis depends on tyrosine 151, which acts as the Proton acceptor.

The protein belongs to the short-chain dehydrogenases/reductases (SDR) family. In terms of assembly, homodimer.

It carries out the reaction a primary alcohol + NAD(+) = an aldehyde + NADH + H(+). The catalysed reaction is a secondary alcohol + NAD(+) = a ketone + NADH + H(+). This Drosophila mulleri (Fruit fly) protein is Alcohol dehydrogenase 1 (Adh1).